Here is a 314-residue protein sequence, read N- to C-terminus: Aspartate carbamoyltransferase catalytic subunit (314 aa).

Carbamoyl phosphate contacts are provided by Arg63 and Thr64. Lys91 is a binding site for L-aspartate. 3 residues coordinate carbamoyl phosphate: Arg113, His143, and Gln146. L-aspartate is bound by residues Arg176 and Arg228. Positions 269 and 270 each coordinate carbamoyl phosphate.

Belongs to the aspartate/ornithine carbamoyltransferase superfamily. ATCase family. As to quaternary structure, heterododecamer (2C3:3R2) of six catalytic PyrB chains organized as two trimers (C3), and six regulatory PyrI chains organized as three dimers (R2).

The enzyme catalyses carbamoyl phosphate + L-aspartate = N-carbamoyl-L-aspartate + phosphate + H(+). It functions in the pathway pyrimidine metabolism; UMP biosynthesis via de novo pathway; (S)-dihydroorotate from bicarbonate: step 2/3. In terms of biological role, catalyzes the condensation of carbamoyl phosphate and aspartate to form carbamoyl aspartate and inorganic phosphate, the committed step in the de novo pyrimidine nucleotide biosynthesis pathway. The protein is Aspartate carbamoyltransferase catalytic subunit of Cutibacterium acnes (strain DSM 16379 / KPA171202) (Propionibacterium acnes).